A 323-amino-acid chain; its full sequence is Macrolide efflux protein A (323 aa).

The next 9 helical transmembrane spans lie at Val6 to Val26, Leu51 to Ile71, Ser105 to Trp125, Asn128 to Val148, Phe182 to Phe202, Ile219 to Gly239, Ile245 to Leu265, Phe270 to Val290, and Tyr303 to Leu323.

The protein belongs to the major facilitator superfamily. Drug:H(+) antiporter-3 (DHA3) (TC 2.A.1.21) family.

It localises to the cell membrane. Functionally, confers resistance to 14-membered macrolides including erythromycin and to 15-membered macrolides but not to 16-membered macrolides, lincosamides or analogs of streptogramin B. May function as an efflux pump to regulate intracellular macrolide levels. In Enterococcus faecalis (Streptococcus faecalis), this protein is Macrolide efflux protein A (mefA).